The sequence spans 269 residues: Probable aquaporin TIP5-1 (269 aa).

5 helical membrane passes run 19-39 (AYFA…GSTI), 54-74 (SLMA…FIAA), 84-104 (AVTF…IFYW), 139-159 (FGAG…VHVA), and 177-197 (ALGA…AGSL). The short motif at 82–84 (NPA) is the NPA 1 element. The short motif at 203-205 (NPA) is the NPA 2 element. A helical transmembrane segment spans residues 223 to 243 (YWAGPMVGAAVAALVHQALVF).

Belongs to the MIP/aquaporin (TC 1.A.8) family. TIP (TC 1.A.8.10) subfamily. Expressed in leaves and anthers, and at lower levels in roots.

It localises to the vacuole membrane. Aquaporins facilitate the transport of water and small neutral solutes across cell membranes. May be involved in transport from the vacuolar compartment to the cytoplasm. This chain is Probable aquaporin TIP5-1 (TIP5;1), found in Oryza sativa subsp. japonica (Rice).